The following is a 756-amino-acid chain: Virulence factor MDV010 (756 aa).

The first 30 residues, 1-30 (MPSKSIADHHAGYGVALAIVALLLIHGTAL), serve as a signal peptide directing secretion. Positions 96-120 (EEHITLSSPRTSTKTTNENGHEKDS) are disordered. A compositionally biased stretch (polar residues) spans 100-113 (TLSSPRTSTKTTNE). N-linked (GlcNAc...) asparagine; by host glycosylation is found at N222, N241, N287, N423, N495, N542, N552, N580, N660, N684, N715, and N744.

It localises to the secreted. In terms of biological role, may play a role in host immune modulation since the protein is secreted and provides an advantage for growth in vivo while it is completely dispensable in cell culture. This Gallid herpesvirus 2 (strain Chicken/Md5/ATCC VR-987) (GaHV-2) protein is Virulence factor MDV010 (MDV010).